A 118-amino-acid polypeptide reads, in one-letter code: uncharacterized protein (118 aa).

3 helical membrane-spanning segments follow: residues 20 to 39 (VEGP…LLWI), 46 to 63 (LVVV…GEAV), and 67 to 85 (LSLV…AMSG). The segment at 85–118 (GDKSKKKGKKQRSILKDADDWDDDSWDDEGDWDE) is disordered. Basic residues predominate over residues 88–97 (SKKKGKKQRS). A compositionally biased stretch (acidic residues) spans 103–118 (DDWDDDSWDDEGDWDE).

It is found in the cell membrane. This is an uncharacterized protein from Archaeoglobus fulgidus (strain ATCC 49558 / DSM 4304 / JCM 9628 / NBRC 100126 / VC-16).